The chain runs to 862 residues: Phosphatidic acid phosphohydrolase 1 (862 aa).

The N-LIP stretch occupies residues 19-104 (NPATLSGAID…VPDELLVSPV (86 aa)). 2 disordered regions span residues 104–183 (VMSA…SVEE) and 300–341 (GSTL…AGSG). The span at 105 to 117 (MSATSSPPQSPET) shows a compositional bias: polar residues. Phosphoserine is present on residues Ser-110 and Ser-114. Positions 132–143 (NENKKKEKKVLE) are enriched in basic and acidic residues. Low complexity-rich tracts occupy residues 161–179 (SETT…TPPD) and 300–313 (GSTL…PSGS). Ser-168 is modified (phosphoserine). Residues 398–402 (DIDGT) carry the DXDXT motif motif. Lys-496 carries the post-translational modification N6-acetyllysine. Ser-511 carries the post-translational modification Phosphoserine. Ser-602 is subject to Phosphoserine; by CDC28. The tract at residues 648–732 (SDISNDDSDN…TPNKSTMSKG (85 aa)) is disordered. Positions 651–663 (SNDDSDNIDEDTD) are enriched in acidic residues. Composition is skewed to polar residues over residues 664 to 679 (VSQQ…NSVK) and 687 to 699 (PQRN…NNNE). Positions 710-730 (ASDLVSSHSSSGSTPNKSTMS) are enriched in low complexity. Thr-723 bears the Phosphothreonine; by CDC28 mark. Residue Ser-744 is modified to Phosphoserine; by CDC28. A phosphoserine mark is found at Ser-748, Ser-773, and Ser-774. Residues 757–780 (MDDEDSNYNRTKSRRASSAAATSI) form a disordered region. N6-acetyllysine is present on Lys-801. Residues 807 to 862 (DVHSLGNSDTESRREQSVNETGRNQLPHNSMDDKDLDSRVSDEFDDDEFDEDEFED) form a disordered region. Residues Ser-810 and Ser-814 each carry the phosphoserine modification. Residue Thr-816 is modified to Phosphothreonine. Over residues 824-834 (VNETGRNQLPH) the composition is skewed to polar residues. Residues 836–848 (SMDDKDLDSRVSD) are compositionally biased toward basic and acidic residues. A phosphoserine mark is found at Ser-844 and Ser-847. Positions 849 to 862 (EFDDDEFDEDEFED) are enriched in acidic residues.

Belongs to the lipin family. It depends on Mg(2+) as a cofactor. Acetylation at Lys-496 and Lys-801 by ESA1 promotes synthesis of diacylglycerol. Post-translationally, phosphorylated by CDC28 at the onset of mitosis, and dephosphorylated by the NEM1-SPO7 complex. Phosphorylation regulates recruitment on promoters of lipid biosynthetic enzymes.

The protein resides in the cytoplasm. Its subcellular location is the nucleus membrane. The protein localises to the endoplasmic reticulum membrane. It carries out the reaction a 1,2-diacyl-sn-glycero-3-phosphate + H2O = a 1,2-diacyl-sn-glycerol + phosphate. Phenylglyoxal and propranolol inhibit activity in dose-dependent manners with IC(50) values of 1.3 mM and 0.2 mM, respectively. Sertraline inhibits activity in a dose-dependent manner with an IC(50) value of 85 uM; the inhibitory effects of sertraline and propranolol are additive. In terms of biological role, mg(2+)-dependent phosphatidate (PA) phosphatase which catalyzes the dephosphorylation of PA to yield diacylglycerol. Required for de novo lipid synthesis and formation of lipid droplets. Controls transcription of phospholipid biosynthetic genes and nuclear structure by regulating the amount of membrane present at the nuclear envelope. Involved in plasmid maintenance, in respiration and in cell proliferation. This chain is Phosphatidic acid phosphohydrolase 1 (PAH1), found in Saccharomyces cerevisiae (strain ATCC 204508 / S288c) (Baker's yeast).